The sequence spans 409 residues: LL-diaminopimelate aminotransferase (409 aa).

Substrate is bound by residues tyrosine 15 and glycine 42. Residues tyrosine 72, 108-109, tyrosine 132, asparagine 186, tyrosine 217, and 245-247 contribute to the pyridoxal 5'-phosphate site; these read AK and SFS. Substrate-binding residues include lysine 109, tyrosine 132, and asparagine 186. Lysine 248 is subject to N6-(pyridoxal phosphate)lysine. Pyridoxal 5'-phosphate-binding residues include arginine 256 and asparagine 291. Positions 291 and 387 each coordinate substrate.

Belongs to the class-I pyridoxal-phosphate-dependent aminotransferase family. LL-diaminopimelate aminotransferase subfamily. Homodimer. Pyridoxal 5'-phosphate serves as cofactor.

It catalyses the reaction (2S,6S)-2,6-diaminopimelate + 2-oxoglutarate = (S)-2,3,4,5-tetrahydrodipicolinate + L-glutamate + H2O + H(+). It participates in amino-acid biosynthesis; L-lysine biosynthesis via DAP pathway; LL-2,6-diaminopimelate from (S)-tetrahydrodipicolinate (aminotransferase route): step 1/1. Its function is as follows. Involved in the synthesis of meso-diaminopimelate (m-DAP or DL-DAP), required for both lysine and peptidoglycan biosynthesis. Catalyzes the direct conversion of tetrahydrodipicolinate to LL-diaminopimelate. The protein is LL-diaminopimelate aminotransferase of Phocaeicola vulgatus (strain ATCC 8482 / DSM 1447 / JCM 5826 / CCUG 4940 / NBRC 14291 / NCTC 11154) (Bacteroides vulgatus).